A 373-amino-acid chain; its full sequence is Chaperone protein DnaJ (373 aa).

The 66-residue stretch at 5–70 (DFYATLGVAR…EKRAMYDQYG (66 aa)) folds into the J domain. The CR-type zinc-finger motif lies at 134-212 (GVKKRINIPT…CRGVGRNKAV (79 aa)). Zn(2+) contacts are provided by cysteine 147, cysteine 150, cysteine 164, cysteine 167, cysteine 186, cysteine 189, cysteine 200, and cysteine 203. 4 CXXCXGXG motif repeats span residues 147 to 154 (CDVCNGSG), 164 to 171 (CPTCKGSG), 186 to 193 (CPTCRGAG), and 200 to 207 (CVKCRGVG).

Belongs to the DnaJ family. Homodimer. It depends on Zn(2+) as a cofactor.

The protein resides in the cytoplasm. Participates actively in the response to hyperosmotic and heat shock by preventing the aggregation of stress-denatured proteins and by disaggregating proteins, also in an autonomous, DnaK-independent fashion. Unfolded proteins bind initially to DnaJ; upon interaction with the DnaJ-bound protein, DnaK hydrolyzes its bound ATP, resulting in the formation of a stable complex. GrpE releases ADP from DnaK; ATP binding to DnaK triggers the release of the substrate protein, thus completing the reaction cycle. Several rounds of ATP-dependent interactions between DnaJ, DnaK and GrpE are required for fully efficient folding. Also involved, together with DnaK and GrpE, in the DNA replication of plasmids through activation of initiation proteins. This chain is Chaperone protein DnaJ, found in Neisseria gonorrhoeae (strain ATCC 700825 / FA 1090).